Here is a 463-residue protein sequence, read N- to C-terminus: L-seryl-tRNA(Sec) selenium transferase (463 aa).

Position 295 is an N6-(pyridoxal phosphate)lysine (Lys295).

It belongs to the SelA family. As to quaternary structure, homodecamer; pentamer of dimers. Binds only one seryl-tRNA(Sec) per dimer. Pyridoxal 5'-phosphate is required as a cofactor.

The protein localises to the cytoplasm. It catalyses the reaction L-seryl-tRNA(Sec) + selenophosphate + H(+) = L-selenocysteinyl-tRNA(Sec) + phosphate. It participates in aminoacyl-tRNA biosynthesis; selenocysteinyl-tRNA(Sec) biosynthesis; selenocysteinyl-tRNA(Sec) from L-seryl-tRNA(Sec) (bacterial route): step 1/1. Converts seryl-tRNA(Sec) to selenocysteinyl-tRNA(Sec) required for selenoprotein biosynthesis. In Escherichia coli O139:H28 (strain E24377A / ETEC), this protein is L-seryl-tRNA(Sec) selenium transferase.